A 1955-amino-acid chain; its full sequence is 227 kDa spindle- and centromere-associated protein (1955 aa).

Coiled coils occupy residues 82 to 129 (KKRI…NDDV), 152 to 317 (EWAS…ELES), 385 to 1747 (VRNI…LIAL), and 1770 to 1813 (ERIV…ERFI). Disordered stretches follow at residues 1865–1896 (PTEQHASRGKEAYRTSSTIKSSEGTTRESYTY) and 1912–1955 (MTSS…TFSE). The span at 1878-1896 (RTSSTIKSSEGTTRESYTY) shows a compositional bias: polar residues. The span at 1938 to 1948 (RKSRPATRKQQ) shows a compositional bias: basic residues.

The protein localises to the cytoplasm. It is found in the cytoskeleton. The protein resides in the microtubule organizing center. It localises to the centrosome. Its subcellular location is the chromosome. The protein localises to the centromere. It is found in the kinetochore. The protein resides in the spindle. In terms of biological role, may play a role in the organization of the spindle apparatus and its interaction with the centromeres. In Parascaris univalens (Nematode worm), this protein is 227 kDa spindle- and centromere-associated protein (PUMA1).